Here is a 381-residue protein sequence, read N- to C-terminus: Acetylornithine deacetylase (381 aa).

His-78 is a Zn(2+) binding site. Asp-80 is a catalytic residue. Residue Asp-110 coordinates Zn(2+). Glu-142 is a catalytic residue. Residues Glu-143, Glu-167, and His-353 each contribute to the Zn(2+) site.

This sequence belongs to the peptidase M20A family. ArgE subfamily. Homodimer. Zn(2+) serves as cofactor. Co(2+) is required as a cofactor. Requires glutathione as cofactor.

It localises to the cytoplasm. It carries out the reaction N(2)-acetyl-L-ornithine + H2O = L-ornithine + acetate. The protein operates within amino-acid biosynthesis; L-arginine biosynthesis; L-ornithine from N(2)-acetyl-L-ornithine (linear): step 1/1. Functionally, catalyzes the hydrolysis of the amide bond of N(2)-acetylated L-amino acids. Cleaves the acetyl group from N-acetyl-L-ornithine to form L-ornithine, an intermediate in L-arginine biosynthesis pathway, and a branchpoint in the synthesis of polyamines. The chain is Acetylornithine deacetylase from Moritella profunda.